We begin with the raw amino-acid sequence, 449 residues long: Biotin carboxylase (449 aa).

The region spanning 1 to 445 is the Biotin carboxylation domain; sequence MLEKVLIANR…NIHYLEKKLG (445 aa). ATP-binding positions include Lys-116, Lys-159, 165–166, 201–204, His-209, and His-236; these read GG and EKFL. The 198-residue stretch at 120–317 folds into the ATP-grasp domain; that stretch reads KDAMKRAGVP…IVKEMLRIAS (198 aa). Residue Lys-238 participates in hydrogencarbonate binding. ATP-binding residues include Glu-276 and Glu-288. The Mg(2+) site is built by Glu-276, Glu-288, and Asn-290. 3 residues coordinate Mn(2+): Glu-276, Glu-288, and Asn-290. Residues Arg-292, Val-295, and Arg-338 each contribute to the hydrogencarbonate site. The active site involves Arg-292. Arg-338 contributes to the biotin binding site.

In terms of assembly, acetyl-CoA carboxylase is a heterohexamer of biotin carboxyl carrier protein, biotin carboxylase and the two subunits of carboxyl transferase in a 2:2 complex. Requires Mg(2+) as cofactor. Mn(2+) is required as a cofactor.

The catalysed reaction is N(6)-biotinyl-L-lysyl-[protein] + hydrogencarbonate + ATP = N(6)-carboxybiotinyl-L-lysyl-[protein] + ADP + phosphate + H(+). It functions in the pathway lipid metabolism; malonyl-CoA biosynthesis; malonyl-CoA from acetyl-CoA: step 1/1. Functionally, this protein is a component of the acetyl coenzyme A carboxylase complex; first, biotin carboxylase catalyzes the carboxylation of the carrier protein and then the transcarboxylase transfers the carboxyl group to form malonyl-CoA. This is Biotin carboxylase (accC) from Pseudomonas aeruginosa (strain ATCC 15692 / DSM 22644 / CIP 104116 / JCM 14847 / LMG 12228 / 1C / PRS 101 / PAO1).